Consider the following 505-residue polypeptide: MASIDFRNKINWHRRYRSPQGVKTEHEILRIFESDRGRIINSPAIRRLQQKTQVFPLERNAAVRTRLTHSMEVQQVGRYIAKEILSRLKEQNRLEEYGLDALTGPFESIVEMACLMHDIGNPPFGHFGEAAINDWFRQRLHPEDAESQPLTHDRCVVSSLRLQEGEENLNDIRRKVRQDICHFEGNAQGIRLVHTLMRMNLTWAQVGGILKYTRPAWWRGPVPDSHRYLMKKPGYYLSEEKYIARLRKELQLAPYSRFPLTWIMEAADDISYCVADLEDAVEKRIFSVEQLYHHLYHAWGHHEKDSLFELVVGNAWEKSRANTLSRSTEDQFFMYLRVNTLNKLVPYAAQRFIDNLPQIFAGTFNQALLEDASGFSRLLELYKNVAVEHVFSHPDVEQLELQGYRVISGLLDIYQPLLSLSLNDFRELVEKERLKRFPIESRLFQKLSTRHRLAYVEVVSKLPTDSAEYPVLEYYYRCRLIQDYISGMTDLYAWDEYRRLMAVEQ.

The HD domain maps to 66 to 273 (RLTHSMEVQQ…MEAADDISYC (208 aa)).

Belongs to the dGTPase family. Type 1 subfamily. In terms of assembly, homotetramer. Mg(2+) is required as a cofactor.

It catalyses the reaction dGTP + H2O = 2'-deoxyguanosine + triphosphate + H(+). DGTPase preferentially hydrolyzes dGTP over the other canonical NTPs. The protein is Deoxyguanosinetriphosphate triphosphohydrolase of Salmonella schwarzengrund (strain CVM19633).